We begin with the raw amino-acid sequence, 124 residues long: Small ribosomal subunit protein uS12 (124 aa).

3-methylthioaspartic acid is present on Asp89. Lys108 is subject to N6-acetyllysine.

It belongs to the universal ribosomal protein uS12 family. As to quaternary structure, part of the 30S ribosomal subunit. Contacts proteins S8 and S17. May interact with IF1 in the 30S initiation complex.

Functionally, with S4 and S5 plays an important role in translational accuracy. In terms of biological role, interacts with and stabilizes bases of the 16S rRNA that are involved in tRNA selection in the A site and with the mRNA backbone. Located at the interface of the 30S and 50S subunits, it traverses the body of the 30S subunit contacting proteins on the other side and probably holding the rRNA structure together. The combined cluster of proteins S8, S12 and S17 appears to hold together the shoulder and platform of the 30S subunit. The polypeptide is Small ribosomal subunit protein uS12 (Escherichia coli O139:H28 (strain E24377A / ETEC)).